The following is a 137-amino-acid chain: MYCTHLKTLQLVVMATLWVTPVRAGTDCRYGCRLNNMTITVEREDCHGSITITTCAGLCETTDLNYQSTWLPRSQGVCNFKEWSYEKVYLEGCPSGVEPFFIPVAKSCDCIKCKTDNTDCDRKSMATPSCIVNPLEM.

The N-terminal stretch at 1 to 24 (MYCTHLKTLQLVVMATLWVTPVRA) is a signal peptide. Disulfide bonds link C32–C78, C46–C93, C55–C108, C59–C110, and C113–C120. N-linked (GlcNAc...) asparagine glycosylation occurs at N36.

Belongs to the glycoprotein hormones subunit beta family. Heterodimer of an alpha and a beta chain.

It localises to the secreted. Functionally, involved in gametogenesis and steroidogenesis. This chain is Gonadotropin subunit beta-1 (cgba), found in Oncorhynchus masou (Cherry salmon).